A 572-amino-acid polypeptide reads, in one-letter code: Proline--tRNA ligase (572 aa).

Belongs to the class-II aminoacyl-tRNA synthetase family. ProS type 1 subfamily. Homodimer.

It is found in the cytoplasm. The catalysed reaction is tRNA(Pro) + L-proline + ATP = L-prolyl-tRNA(Pro) + AMP + diphosphate. Functionally, catalyzes the attachment of proline to tRNA(Pro) in a two-step reaction: proline is first activated by ATP to form Pro-AMP and then transferred to the acceptor end of tRNA(Pro). As ProRS can inadvertently accommodate and process non-cognate amino acids such as alanine and cysteine, to avoid such errors it has two additional distinct editing activities against alanine. One activity is designated as 'pretransfer' editing and involves the tRNA(Pro)-independent hydrolysis of activated Ala-AMP. The other activity is designated 'posttransfer' editing and involves deacylation of mischarged Ala-tRNA(Pro). The misacylated Cys-tRNA(Pro) is not edited by ProRS. The protein is Proline--tRNA ligase of Escherichia fergusonii (strain ATCC 35469 / DSM 13698 / CCUG 18766 / IAM 14443 / JCM 21226 / LMG 7866 / NBRC 102419 / NCTC 12128 / CDC 0568-73).